The sequence spans 172 residues: Avenin-like a4 (172 aa).

A signal peptide spans 1 to 19 (MKTMFILALIALAATSVVA).

It belongs to the prolamin family. In terms of processing, contains 7 disulfide bonds.

Functionally, seed storage protein. Not integrated in the gluten polymer through disulfide bonds, unless incorporated by reduction and reoxidation during dough making. Increases dough strength and bread volume, but decreases dough stability when added into a base wheat flour. The protein is Avenin-like a4 of Triticum aestivum (Wheat).